We begin with the raw amino-acid sequence, 254 residues long: Tumor necrosis factor ligand superfamily member 9 (254 aa).

At 1–28 the chain is on the cytoplasmic side; the sequence is MEYASDASLDPEAPWPPAPRARACRVLP. The chain crosses the membrane as a helical; Signal-anchor for type II membrane protein span at residues 29–49; the sequence is WALVAGLLLLLLLAAACAVFL. The Extracellular portion of the chain corresponds to 50–254; it reads ACPWAVSGAR…PAGLPSPRSE (205 aa). One can recognise a THD domain in the interval 91-240; it reads MFAQLVAQNV…GATVLGLFRV (150 aa).

Belongs to the tumor necrosis factor family. As to quaternary structure, homotrimer. As to expression, expressed in brain, placenta, lung, skeletal muscle and kidney.

The protein localises to the membrane. Functionally, cytokine that binds to TNFRSF9. Induces the proliferation of activated peripheral blood T-cells. May have a role in activation-induced cell death (AICD). May play a role in cognate interactions between T-cells and B-cells/macrophages. The sequence is that of Tumor necrosis factor ligand superfamily member 9 (TNFSF9) from Homo sapiens (Human).